Here is a 100-residue protein sequence, read N- to C-terminus: UPF0473 protein LMHCC_1068 (100 aa).

Belongs to the UPF0473 family.

The polypeptide is UPF0473 protein LMHCC_1068 (Listeria monocytogenes serotype 4a (strain HCC23)).